Consider the following 2368-residue polypeptide: Serine/threonine-protein kinase MEC1 (2368 aa).

Positions 1399-1944 constitute an FAT domain; sequence LLAQRSLETD…LWYITALVNS (546 aa). Positions 2049-2352 constitute a PI3K/PI4K catalytic domain; the sequence is FGSSYKVFSS…QTETLIQEAT (304 aa). A G-loop region spans residues 2055 to 2061; it reads VFSSLKK. The tract at residues 2140–2368 is binding to the RPA complex; it reads SILSTKYESL…KMYIGWLPFW (229 aa). The segment at 2221 to 2229 is catalytic loop; that stretch reads GLGDRHCEN. The segment at 2241 to 2265 is activation loop; sequence HVDFDCLFEKGKRLPVPEIVPFRLT. One can recognise an FATC domain in the interval 2336–2368; the sequence is LVLSVAGQTETLIQEATSEDNLSKMYIGWLPFW.

Belongs to the PI3/PI4-kinase family. ATM subfamily. In terms of assembly, interacts with LCD1, which is required for localization MEC1 to the RPA complex. Interacts directly with the RPA subunits RFA1 and RFA2.

It localises to the nucleus. It catalyses the reaction L-seryl-[protein] + ATP = O-phospho-L-seryl-[protein] + ADP + H(+). The catalysed reaction is L-threonyl-[protein] + ATP = O-phospho-L-threonyl-[protein] + ADP + H(+). In terms of biological role, serine/threonine protein kinase which activates checkpoint signaling upon genotoxic stresses such as ionizing radiation (IR), ultraviolet light (UV), or DNA replication stalling, thereby acting as a DNA damage sensor. Recognizes the substrate consensus sequence [ST]-Q. Recruited in complex with protein LCD1 by the single-strand-binding protein complex RPA to DNA lesions in order to initiate the DNA repair by homologous recombination, after the MRX-complex and TEL1 are displaced. Phosphorylates LCD1 and RPA2, a subunit of RPA, involved in DNA replication, repair and recombination. Phosphorylates RAD9, CHK1 and RAD53, which leads to the activation of the CHK1 and RAD53 kinases involved in DNA damage repair cascade. Phosphorylates histone H2A to form H2AS128ph (gamma-H2A) at sites of DNA damage, also involved in the regulation of DNA damage response mechanism. Also phosphorylates SLX4 and RTT107 which are proteins involved in genome stability. Required for cell growth and meiotic recombination. This chain is Serine/threonine-protein kinase MEC1 (MEC1), found in Saccharomyces cerevisiae (strain ATCC 204508 / S288c) (Baker's yeast).